The primary structure comprises 451 residues: Chromosomal replication initiator protein DnaA (451 aa).

The interval 1–72 is domain I, interacts with DnaA modulators; that stretch reads MQSIEDIWQE…ANILQEITGR (72 aa). The interval 72-108 is domain II; sequence RLFDVRFIDGEQEENFEYTVIKPNPALDEDGIEIGKH. A domain III, AAA+ region region spans residues 109 to 325; sequence MLNPRYVFDT…GALIRVVAYS (217 aa). ATP-binding residues include Gly153, Gly155, Lys156, and Thr157. Residues 326–451 form a domain IV, binds dsDNA region; that stretch reads SLVNKDITAG…KNLRKAQNMF (126 aa).

Belongs to the DnaA family. Oligomerizes as a right-handed, spiral filament on DNA at oriC.

It localises to the cytoplasm. In terms of biological role, plays an essential role in the initiation and regulation of chromosomal replication. ATP-DnaA binds to the origin of replication (oriC) to initiate formation of the DNA replication initiation complex once per cell cycle. Binds the DnaA box (a 9 base pair repeat at the origin) and separates the double-stranded (ds)DNA. Forms a right-handed helical filament on oriC DNA; dsDNA binds to the exterior of the filament while single-stranded (ss)DNA is stabiized in the filament's interior. The ATP-DnaA-oriC complex binds and stabilizes one strand of the AT-rich DNA unwinding element (DUE), permitting loading of DNA polymerase. After initiation quickly degrades to an ADP-DnaA complex that is not apt for DNA replication. Binds acidic phospholipids. This is Chromosomal replication initiator protein DnaA from Listeria monocytogenes serotype 4b (strain F2365).